A 944-amino-acid polypeptide reads, in one-letter code: Translation initiation factor IF-2 (944 aa).

Disordered stretches follow at residues 50 to 91 and 114 to 349; these read SAKT…FAGK and KVEV…VPAT. Composition is skewed to basic and acidic residues over residues 75–86, 124–157, 164–185, and 199–233; these read ESAKKNKEDHPR, VVTEKPKASEPVKKAEPKVEAKSEPKVEKVETKD, AEVKPENVADKKEPVVTEEKKK, and KRAEDIKKEQAAARPEKKKFDKNRNDRNNRSDNRR. Residues 267–280 show a composition bias toward polar residues; the sequence is SSGSAPATDSFTPA. A compositionally biased stretch (basic and acidic residues) spans 286 to 307; the sequence is SRRDRDRKKSDNNRDNTKDGNR. Polar residues-rich tracts occupy residues 317 to 331 and 338 to 348; these read NRNQVRNARNSNWNQ and YQNNQSSSVPA. Positions 443-614 constitute a tr-type G domain; it reads ERPAVVTIMG…LLVAEVQELK (172 aa). Positions 452–459 are G1; it reads GHVDHGKT. 452–459 is a GTP binding site; the sequence is GHVDHGKT. Residues 477–481 form a G2 region; the sequence is GITQH. The tract at residues 498–501 is G3; that stretch reads DTPG. GTP is bound by residues 498–502 and 552–555; these read DTPGH and NKID. The segment at 552 to 555 is G4; sequence NKID. Residues 590-592 are G5; it reads SAK.

This sequence belongs to the TRAFAC class translation factor GTPase superfamily. Classic translation factor GTPase family. IF-2 subfamily.

The protein resides in the cytoplasm. Functionally, one of the essential components for the initiation of protein synthesis. Protects formylmethionyl-tRNA from spontaneous hydrolysis and promotes its binding to the 30S ribosomal subunits. Also involved in the hydrolysis of GTP during the formation of the 70S ribosomal complex. This Lactococcus lactis subsp. lactis (strain IL1403) (Streptococcus lactis) protein is Translation initiation factor IF-2 (infB).